A 199-amino-acid chain; its full sequence is Recombination protein RecR (199 aa).

The C4-type zinc finger occupies 58-73; that stretch reads CQTCHHLSAEPTCEIC. Residues 81–175 enclose the Toprim domain; the sequence is GQICVVADSR…RVSRIAYGLP (95 aa).

Belongs to the RecR family.

Its function is as follows. May play a role in DNA repair. It seems to be involved in an RecBC-independent recombinational process of DNA repair. It may act with RecF and RecO. This is Recombination protein RecR from Synechococcus sp. (strain WH7803).